A 390-amino-acid polypeptide reads, in one-letter code: Carbamoyl phosphate synthase small chain (390 aa).

The tract at residues 1–198 is CPSase; that stretch reads MTSTPTPTPT…LGEGYAVGPE (198 aa). The L-glutamine site is built by S53, G250, and G252. Residues 202 to 390 enclose the Glutamine amidotransferase type-1 domain; sequence RVVVLDYGVK…VGELKGRVEA (189 aa). C279 (nucleophile) is an active-site residue. Residues L280, Q283, N321, G323, and F324 each coordinate L-glutamine. Active-site residues include H363 and E365.

Belongs to the CarA family. As to quaternary structure, composed of two chains; the small (or glutamine) chain promotes the hydrolysis of glutamine to ammonia, which is used by the large (or ammonia) chain to synthesize carbamoyl phosphate. Tetramer of heterodimers (alpha,beta)4.

It catalyses the reaction hydrogencarbonate + L-glutamine + 2 ATP + H2O = carbamoyl phosphate + L-glutamate + 2 ADP + phosphate + 2 H(+). It carries out the reaction L-glutamine + H2O = L-glutamate + NH4(+). It participates in amino-acid biosynthesis; L-arginine biosynthesis; carbamoyl phosphate from bicarbonate: step 1/1. Its pathway is pyrimidine metabolism; UMP biosynthesis via de novo pathway; (S)-dihydroorotate from bicarbonate: step 1/3. Small subunit of the glutamine-dependent carbamoyl phosphate synthetase (CPSase). CPSase catalyzes the formation of carbamoyl phosphate from the ammonia moiety of glutamine, carbonate, and phosphate donated by ATP, constituting the first step of 2 biosynthetic pathways, one leading to arginine and/or urea and the other to pyrimidine nucleotides. The small subunit (glutamine amidotransferase) binds and cleaves glutamine to supply the large subunit with the substrate ammonia. In Maricaulis maris (strain MCS10) (Caulobacter maris), this protein is Carbamoyl phosphate synthase small chain.